The following is a 538-amino-acid chain: Putative cysteine ligase BshC (538 aa).

Residues 460–484 adopt a coiled-coil conformation; the sequence is KINEQIELLERMLKRNVEKKHEVEL.

Belongs to the BshC family.

Involved in bacillithiol (BSH) biosynthesis. May catalyze the last step of the pathway, the addition of cysteine to glucosamine malate (GlcN-Mal) to generate BSH. This chain is Putative cysteine ligase BshC, found in Bacillus anthracis (strain A0248).